Here is a 180-residue protein sequence, read N- to C-terminus: Large ribosomal subunit protein uL6 (180 aa).

Belongs to the universal ribosomal protein uL6 family. As to quaternary structure, part of the 50S ribosomal subunit.

In terms of biological role, this protein binds to the 23S rRNA, and is important in its secondary structure. It is located near the subunit interface in the base of the L7/L12 stalk, and near the tRNA binding site of the peptidyltransferase center. This chain is Large ribosomal subunit protein uL6, found in Picosynechococcus sp. (strain ATCC 27264 / PCC 7002 / PR-6) (Agmenellum quadruplicatum).